We begin with the raw amino-acid sequence, 273 residues long: Octanoyltransferase LipM (273 aa).

A BPL/LPL catalytic domain is found at 33-244; it reads GKTPPTLRFY…AFTRLYAVEF (212 aa). Catalysis depends on Cys-146, which acts as the Acyl-thioester intermediate.

The protein belongs to the octanoyltransferase LipM family. As to quaternary structure, monomer.

It catalyses the reaction octanoyl-[ACP] + L-lysyl-[protein] = N(6)-octanoyl-L-lysyl-[protein] + holo-[ACP] + H(+). The protein operates within protein modification; protein lipoylation via endogenous pathway; protein N(6)-(lipoyl)lysine from octanoyl-[acyl-carrier-protein]. Catalyzes the transfer of endogenously produced octanoic acid from octanoyl-acyl-carrier-protein onto the lipoyl domain of GcvH, an intermediate carrier during protein lipoylation. This chain is Octanoyltransferase LipM, found in Moorella thermoacetica (strain ATCC 39073 / JCM 9320).